Here is a 367-residue protein sequence, read N- to C-terminus: tRNA N6-adenosine threonylcarbamoyltransferase (367 aa).

His-123 and His-127 together coordinate Fe cation. Substrate contacts are provided by residues 145 to 149, Asp-178, Gly-191, and Asn-288; that span reads LVSGG. Residue Asp-316 coordinates Fe cation.

The protein belongs to the KAE1 / TsaD family. Fe(2+) serves as cofactor.

It is found in the cytoplasm. The catalysed reaction is L-threonylcarbamoyladenylate + adenosine(37) in tRNA = N(6)-L-threonylcarbamoyladenosine(37) in tRNA + AMP + H(+). Its function is as follows. Required for the formation of a threonylcarbamoyl group on adenosine at position 37 (t(6)A37) in tRNAs that read codons beginning with adenine. Is involved in the transfer of the threonylcarbamoyl moiety of threonylcarbamoyl-AMP (TC-AMP) to the N6 group of A37, together with TsaE and TsaB. TsaD likely plays a direct catalytic role in this reaction. The protein is tRNA N6-adenosine threonylcarbamoyltransferase of Caulobacter vibrioides (strain ATCC 19089 / CIP 103742 / CB 15) (Caulobacter crescentus).